A 211-amino-acid polypeptide reads, in one-letter code: ATP phosphoribosyltransferase (211 aa).

It belongs to the ATP phosphoribosyltransferase family. Short subfamily. As to quaternary structure, heteromultimer composed of HisG and HisZ subunits.

It localises to the cytoplasm. It carries out the reaction 1-(5-phospho-beta-D-ribosyl)-ATP + diphosphate = 5-phospho-alpha-D-ribose 1-diphosphate + ATP. It participates in amino-acid biosynthesis; L-histidine biosynthesis; L-histidine from 5-phospho-alpha-D-ribose 1-diphosphate: step 1/9. In terms of biological role, catalyzes the condensation of ATP and 5-phosphoribose 1-diphosphate to form N'-(5'-phosphoribosyl)-ATP (PR-ATP). Has a crucial role in the pathway because the rate of histidine biosynthesis seems to be controlled primarily by regulation of HisG enzymatic activity. The sequence is that of ATP phosphoribosyltransferase from Pseudomonas putida (strain ATCC 700007 / DSM 6899 / JCM 31910 / BCRC 17059 / LMG 24140 / F1).